Here is a 392-residue protein sequence, read N- to C-terminus: Antitrypsin (392 aa).

Residues 1–16 form the signal peptide; the sequence is MKTIICLFTIAIAAMA.

Belongs to the serpin family. Hemolymph.

The protein localises to the secreted. Its function is as follows. May play a role in the prophenoloxidase activating system in the silkworm hemolymph. This Bombyx mori (Silk moth) protein is Antitrypsin.